Consider the following 456-residue polypeptide: Decaprenyl-diphosphate synthase (456 aa).

Residues K183, R186, and H216 each coordinate isopentenyl diphosphate. Residues D223 and D227 each contribute to the Mg(2+) site. R233 lines the isopentenyl diphosphate pocket.

Belongs to the FPP/GGPP synthase family. Requires Mg(2+) as cofactor.

It is found in the mitochondrion. It carries out the reaction 7 isopentenyl diphosphate + (2E,6E)-farnesyl diphosphate = all-trans-decaprenyl diphosphate + 7 diphosphate. It participates in cofactor biosynthesis; ubiquinone biosynthesis. Its function is as follows. Supplies decaprenyl diphosphate, the precursor for the side chain of the isoprenoid quinones ubiquinone-10. The chain is Decaprenyl-diphosphate synthase (coq1) from Dictyostelium discoideum (Social amoeba).